The sequence spans 262 residues: Tetrahydromethanopterin S-methyltransferase subunit C (262 aa).

6 helical membrane passes run 35 to 57 (FVPSLAMLIGGLLAAGACVAGAN), 70 to 92 (GVPSIGMVSLGMGTISALAGVLI), 97 to 119 (GLPVLATPILAAVIAVVVGFIVG), 140 to 162 (LSLMGALAILGFCTAFAGGFSAD), 172 to 194 (GVIALAFIAAGMSILHPFNACIG), and 214 to 236 (WLIFSIAKLDIVSIVVAAIFWLY).

It belongs to the MtrC family. In terms of assembly, the complex is composed of 8 subunits; MtrA, MtrB, MtrC, MtrD, MtrE, MtrF, MtrG and MtrH.

It localises to the cell membrane. The enzyme catalyses 5-methyl-5,6,7,8-tetrahydromethanopterin + coenzyme M + 2 Na(+)(in) = 5,6,7,8-tetrahydromethanopterin + methyl-coenzyme M + 2 Na(+)(out). It participates in one-carbon metabolism; methanogenesis from CO(2); methyl-coenzyme M from 5,10-methylene-5,6,7,8-tetrahydromethanopterin: step 2/2. Part of a complex that catalyzes the formation of methyl-coenzyme M and tetrahydromethanopterin from coenzyme M and methyl-tetrahydromethanopterin. This is an energy-conserving, sodium-ion translocating step. The polypeptide is Tetrahydromethanopterin S-methyltransferase subunit C (Methanococcus maripaludis (strain DSM 14266 / JCM 13030 / NBRC 101832 / S2 / LL)).